The chain runs to 182 residues: uncharacterized protein (182 aa).

2 disordered regions span residues 1–49 (MAAP…DGGS) and 126–171 (QGGH…VHAQ). Residues 17 to 39 (ELLEKAARLERGPPPRGDPEAVG) are compositionally biased toward basic and acidic residues.

This is an uncharacterized protein from Homo sapiens (Human).